Reading from the N-terminus, the 307-residue chain is Pantothenate kinase (307 aa).

90–97 (GSVAVGKS) provides a ligand contact to ATP.

This sequence belongs to the prokaryotic pantothenate kinase family.

The protein localises to the cytoplasm. The enzyme catalyses (R)-pantothenate + ATP = (R)-4'-phosphopantothenate + ADP + H(+). The protein operates within cofactor biosynthesis; coenzyme A biosynthesis; CoA from (R)-pantothenate: step 1/5. This Levilactobacillus brevis (strain ATCC 367 / BCRC 12310 / CIP 105137 / JCM 1170 / LMG 11437 / NCIMB 947 / NCTC 947) (Lactobacillus brevis) protein is Pantothenate kinase.